Consider the following 266-residue polypeptide: 4-hydroxy-tetrahydrodipicolinate reductase (266 aa).

NAD(+) is bound by residues G8–M13 and E33. R34 lines the NADP(+) pocket. NAD(+)-binding positions include G97–T99 and A121–M124. H154 (proton donor/acceptor) is an active-site residue. (S)-2,3,4,5-tetrahydrodipicolinate is bound at residue H155. K158 acts as the Proton donor in catalysis. (S)-2,3,4,5-tetrahydrodipicolinate is bound at residue G164–T165.

It belongs to the DapB family.

It is found in the cytoplasm. It catalyses the reaction (S)-2,3,4,5-tetrahydrodipicolinate + NAD(+) + H2O = (2S,4S)-4-hydroxy-2,3,4,5-tetrahydrodipicolinate + NADH + H(+). It carries out the reaction (S)-2,3,4,5-tetrahydrodipicolinate + NADP(+) + H2O = (2S,4S)-4-hydroxy-2,3,4,5-tetrahydrodipicolinate + NADPH + H(+). The protein operates within amino-acid biosynthesis; L-lysine biosynthesis via DAP pathway; (S)-tetrahydrodipicolinate from L-aspartate: step 4/4. Functionally, catalyzes the conversion of 4-hydroxy-tetrahydrodipicolinate (HTPA) to tetrahydrodipicolinate. The protein is 4-hydroxy-tetrahydrodipicolinate reductase of Geobacter metallireducens (strain ATCC 53774 / DSM 7210 / GS-15).